A 244-amino-acid chain; its full sequence is Ethylene-responsive transcription factor ERF013 (244 aa).

A disordered region spans residues Met-1–His-33. Residues Thr-11–Ser-29 are compositionally biased toward low complexity. A DNA-binding region (AP2/ERF) is located at residues Lys-42 to Pro-99. Residues Gln-123 to Asp-178 are disordered. The segment covering Glu-143–Pro-156 has biased composition (basic and acidic residues). A compositionally biased stretch (low complexity) spans Ser-157–Pro-166.

This sequence belongs to the AP2/ERF transcription factor family. ERF subfamily.

The protein localises to the nucleus. In terms of biological role, probably acts as a transcriptional activator. Binds to the GCC-box pathogenesis-related promoter element. May be involved in the regulation of gene expression by stress factors and by components of stress signal transduction pathways. This chain is Ethylene-responsive transcription factor ERF013 (ERF013), found in Arabidopsis thaliana (Mouse-ear cress).